The sequence spans 650 residues: Probable Xaa-Pro aminopeptidase P (650 aa).

Residues Asp-447, Asp-458, Glu-556, and Glu-570 each coordinate Mn(2+).

The protein belongs to the peptidase M24B family. The cofactor is Mn(2+).

It catalyses the reaction Release of any N-terminal amino acid, including proline, that is linked to proline, even from a dipeptide or tripeptide.. Its function is as follows. Catalyzes the removal of a penultimate prolyl residue from the N-termini of peptides. In Phaeosphaeria nodorum (strain SN15 / ATCC MYA-4574 / FGSC 10173) (Glume blotch fungus), this protein is Probable Xaa-Pro aminopeptidase P (AMPP).